Here is an 88-residue protein sequence, read N- to C-terminus: Putative membrane protein insertion efficiency factor (88 aa).

The tract at residues 66 to 88 (DFVPPKKEKNADSEHSCKAHHHH) is disordered. Over residues 69–82 (PPKKEKNADSEHSC) the composition is skewed to basic and acidic residues.

It belongs to the UPF0161 family.

The protein localises to the cell membrane. In terms of biological role, could be involved in insertion of integral membrane proteins into the membrane. In Listeria monocytogenes serotype 4b (strain CLIP80459), this protein is Putative membrane protein insertion efficiency factor.